Reading from the N-terminus, the 200-residue chain is Recombination protein RecR (200 aa).

The segment at 57-72 (CRQCRTLTEQELCPQC) adopts a C4-type zinc-finger fold. The Toprim domain occupies 80-175 (TQLCVVEGPV…TATRIAHGVP (96 aa)).

This sequence belongs to the RecR family.

Functionally, may play a role in DNA repair. It seems to be involved in an RecBC-independent recombinational process of DNA repair. It may act with RecF and RecO. The sequence is that of Recombination protein RecR from Pseudomonas entomophila (strain L48).